A 529-amino-acid chain; its full sequence is Bifunctional purine biosynthesis protein PurH (529 aa).

An MGS-like domain is found at 1–148 (MQQRRPVRRA…KNHKDVAIVV (148 aa)). Position 287 is an N6-acetyllysine (Lys287).

Belongs to the PurH family.

The catalysed reaction is (6R)-10-formyltetrahydrofolate + 5-amino-1-(5-phospho-beta-D-ribosyl)imidazole-4-carboxamide = 5-formamido-1-(5-phospho-D-ribosyl)imidazole-4-carboxamide + (6S)-5,6,7,8-tetrahydrofolate. It catalyses the reaction IMP + H2O = 5-formamido-1-(5-phospho-D-ribosyl)imidazole-4-carboxamide. The protein operates within purine metabolism; IMP biosynthesis via de novo pathway; 5-formamido-1-(5-phospho-D-ribosyl)imidazole-4-carboxamide from 5-amino-1-(5-phospho-D-ribosyl)imidazole-4-carboxamide (10-formyl THF route): step 1/1. It participates in purine metabolism; IMP biosynthesis via de novo pathway; IMP from 5-formamido-1-(5-phospho-D-ribosyl)imidazole-4-carboxamide: step 1/1. The sequence is that of Bifunctional purine biosynthesis protein PurH from Escherichia coli O157:H7.